The primary structure comprises 194 residues: Large ribosomal subunit protein uL6x (194 aa).

Thr75 bears the Phosphothreonine mark.

Belongs to the universal ribosomal protein uL6 family.

The chain is Large ribosomal subunit protein uL6x (RPL9D) from Arabidopsis thaliana (Mouse-ear cress).